A 551-amino-acid polypeptide reads, in one-letter code: E3 ubiquitin-protein ligase TRIM8 (551 aa).

Residues 15–56 (CPICLHVFVEPVQLPCKHNFCRGCIGEAWAKDSGLVRCPECN) form an RING-type zinc finger. 2 consecutive B box-type zinc fingers follow at residues 92-132 (CVFC…ARGH) and 140-182 (VRAW…VCDV). Coiled coils occupy residues 181–249 (DVEI…DLRQ) and 274–295 (ERMQ…KTED). Residues 399–457 (QYGAAGTASSEGQSGQPLGPCSSTQHLVALPGGTQPVHSSPVFPPSQYPNGSTTQQPML) form a disordered region. Composition is skewed to polar residues over residues 405 to 424 (TASS…STQH) and 446 to 456 (YPNGSTTQQPM).

Belongs to the TRIM/RBCC family. As to quaternary structure, homodimer. Interacts with SOCS1 (via) SH2 domain and SOCS box. Interacts with HSP90AB1; prevents nucleus translocation of phosphorylated STAT3 and HSP90AB1. Interacts with MAP3K7/TAK1. Interacts with PIAS3. Interacts with TICAM1. Interacts with TRIM15; this interaction prevents TRIM8 cytoplasmic translocation. As to expression, high expression in heart, liver, and thymus. Expressed in embryonic CNS, kidney, lens and gut.

It catalyses the reaction S-ubiquitinyl-[E2 ubiquitin-conjugating enzyme]-L-cysteine + [acceptor protein]-L-lysine = [E2 ubiquitin-conjugating enzyme]-L-cysteine + N(6)-ubiquitinyl-[acceptor protein]-L-lysine.. It participates in protein modification; protein ubiquitination. Functionally, E3 ubiquitin-protein ligase that participates in multiple biological processes including cell survival, differentiation, apoptosis, and in particular, the innate immune response. Participates in the activation of interferon-gamma signaling by promoting proteasomal degradation of the repressor SOCS1. Plays a positive role in the TNFalpha and IL-1beta signaling pathways. Mechanistically, induces the 'Lys-63'-linked polyubiquitination of MAP3K7/TAK1 component leading to the activation of NF-kappa-B. Also modulates STAT3 activity through negative regulation of PIAS3, either by degradation of PIAS3 through the ubiquitin-proteasome pathway or exclusion of PIAS3 from the nucleus. Negatively regulates TLR3/4-mediated innate immune response by catalyzing 'Lys-6'- and 'Lys-33'-linked polyubiquitination of TICAM1 and thereby disrupting the TICAM1-TBK1 interaction. In Mus musculus (Mouse), this protein is E3 ubiquitin-protein ligase TRIM8 (Trim8).